The following is a 168-amino-acid chain: HTH-type transcriptional regulator IscR (168 aa).

The HTH rrf2-type domain occupies 2–131 (KLTSKGRYAV…NNITLGELMK (130 aa)). Residues 28–51 (LADISERQGISLSYLEQLFSKLRK) constitute a DNA-binding region (H-T-H motif). Residues cysteine 92, cysteine 98, and cysteine 104 each contribute to the [2Fe-2S] cluster site.

[2Fe-2S] cluster serves as cofactor.

Its function is as follows. Regulates the transcription of several operons and genes involved in the biogenesis of Fe-S clusters and Fe-S-containing proteins. This Vibrio campbellii (strain ATCC BAA-1116) protein is HTH-type transcriptional regulator IscR.